We begin with the raw amino-acid sequence, 314 residues long: Olfactory receptor 1E1 (314 aa).

The Extracellular segment spans residues M1 to N25. An N-linked (GlcNAc...) asparagine glycan is attached at N5. The chain crosses the membrane as a helical span at residues L26 to I49. The Cytoplasmic portion of the chain corresponds to R50–T57. Residues P58–P79 form a helical membrane-spanning segment. At K80 to Q100 the chain is on the extracellular side. Residues C97 and C189 are joined by a disulfide bond. Residues M101 to Y120 traverse the membrane as a helical segment. At D121–M139 the chain is on the cytoplasmic side. The helical transmembrane segment at L140–L158 threads the bilayer. Topologically, residues H159–N195 are extracellular. The chain crosses the membrane as a helical span at residues E196 to A219. Over R220–K236 the chain is Cytoplasmic. A helical transmembrane segment spans residues A237–Y259. The Extracellular segment spans residues L260–T272. Residues V273–L292 form a helical membrane-spanning segment. At R293 to L314 the chain is on the cytoplasmic side.

This sequence belongs to the G-protein coupled receptor 1 family.

It localises to the cell membrane. Odorant receptor. The chain is Olfactory receptor 1E1 (OR1E1) from Pan troglodytes (Chimpanzee).